The chain runs to 380 residues: Cytochrome b (380 aa).

The next 4 membrane-spanning stretches (helical) occupy residues 34-54 (FGSLLGICLTTQILTGLLLAA), 78-99 (WLIRNLHANGASFFFICIYMHI), 114-134 (WNTGVILLLTLMATAFVGYVL), and 179-199 (FFTLHFLLPFMIMGLTLIHLT). Heme b contacts are provided by His84 and His98. Heme b-binding residues include His183 and His197. His202 is an a ubiquinone binding site. 4 consecutive transmembrane segments (helical) span residues 227 to 247 (LKDTLGFMLMFLPLMTLALFS), 289 to 309 (LGGVLALAASMLILFLAPLLH), 321 to 341 (LSQLLFWTLTANLLILTWVGS), and 348 to 368 (FIIIGQLASLTYFTILLILFP).

The protein belongs to the cytochrome b family. In terms of assembly, the cytochrome bc1 complex contains 11 subunits: 3 respiratory subunits (MT-CYB, CYC1 and UQCRFS1), 2 core proteins (UQCRC1 and UQCRC2) and 6 low-molecular weight proteins (UQCRH/QCR6, UQCRB/QCR7, UQCRQ/QCR8, UQCR10/QCR9, UQCR11/QCR10 and a cleavage product of UQCRFS1). This cytochrome bc1 complex then forms a dimer. It depends on heme b as a cofactor.

Its subcellular location is the mitochondrion inner membrane. Functionally, component of the ubiquinol-cytochrome c reductase complex (complex III or cytochrome b-c1 complex) that is part of the mitochondrial respiratory chain. The b-c1 complex mediates electron transfer from ubiquinol to cytochrome c. Contributes to the generation of a proton gradient across the mitochondrial membrane that is then used for ATP synthesis. This is Cytochrome b (MT-CYB) from Balearica regulorum (Grey crowned-crane).